Here is a 198-residue protein sequence, read N- to C-terminus: Recombination protein RecR (198 aa).

The C4-type zinc-finger motif lies at 57–72 (CEKCNTFTEAQICEVC). The 96-residue stretch at 80-175 (TLLCVVETPA…SVTRLARGVP (96 aa)) folds into the Toprim domain.

The protein belongs to the RecR family.

In terms of biological role, may play a role in DNA repair. It seems to be involved in an RecBC-independent recombinational process of DNA repair. It may act with RecF and RecO. The sequence is that of Recombination protein RecR from Paraburkholderia phymatum (strain DSM 17167 / CIP 108236 / LMG 21445 / STM815) (Burkholderia phymatum).